Here is a 450-residue protein sequence, read N- to C-terminus: uncharacterized protein (450 aa).

Residues 387 to 416 (ELDEKNNNKEENKNQDLHEPKESSSEDLLK) are compositionally biased toward basic and acidic residues. Residues 387 to 439 (ELDEKNNNKEENKNQDLHEPKESSSEDLLKRLNNLKINTNEGPVQDNENHDNE) form a disordered region.

This is an uncharacterized protein from Saccharomyces cerevisiae (strain ATCC 204508 / S288c) (Baker's yeast).